The following is a 218-amino-acid chain: Octanoyltransferase (218 aa).

Residues 31–206 (EETPDEVWLV…ELVNLLGYEQ (176 aa)) enclose the BPL/LPL catalytic domain. Substrate contacts are provided by residues 70 to 77 (RGGQVTYH), 137 to 139 (SLG), and 150 to 152 (GLA). Cysteine 168 functions as the Acyl-thioester intermediate in the catalytic mechanism.

Belongs to the LipB family.

The protein localises to the cytoplasm. It catalyses the reaction octanoyl-[ACP] + L-lysyl-[protein] = N(6)-octanoyl-L-lysyl-[protein] + holo-[ACP] + H(+). It participates in protein modification; protein lipoylation via endogenous pathway; protein N(6)-(lipoyl)lysine from octanoyl-[acyl-carrier-protein]: step 1/2. Functionally, catalyzes the transfer of endogenously produced octanoic acid from octanoyl-acyl-carrier-protein onto the lipoyl domains of lipoate-dependent enzymes. Lipoyl-ACP can also act as a substrate although octanoyl-ACP is likely to be the physiological substrate. This is Octanoyltransferase from Vibrio vulnificus (strain YJ016).